The primary structure comprises 150 residues: S-protein homolog 28 (150 aa).

An N-linked (GlcNAc...) asparagine glycan is attached at Asn122.

The protein belongs to the plant self-incompatibility (S1) protein family.

It localises to the secreted. In Arabidopsis thaliana (Mouse-ear cress), this protein is S-protein homolog 28.